We begin with the raw amino-acid sequence, 220 residues long: Phosphatidylserine decarboxylase proenzyme (220 aa).

Ser188 serves as the catalytic Schiff-base intermediate with substrate; via pyruvic acid. Position 188 is a pyruvic acid (Ser); by autocatalysis (Ser188).

This sequence belongs to the phosphatidylserine decarboxylase family. PSD-A subfamily. In terms of assembly, heterodimer of a large membrane-associated beta subunit and a small pyruvoyl-containing alpha subunit. It depends on pyruvate as a cofactor. Is synthesized initially as an inactive proenzyme. Formation of the active enzyme involves a self-maturation process in which the active site pyruvoyl group is generated from an internal serine residue via an autocatalytic post-translational modification. Two non-identical subunits are generated from the proenzyme in this reaction, and the pyruvate is formed at the N-terminus of the alpha chain, which is derived from the carboxyl end of the proenzyme. The post-translation cleavage follows an unusual pathway, termed non-hydrolytic serinolysis, in which the side chain hydroxyl group of the serine supplies its oxygen atom to form the C-terminus of the beta chain, while the remainder of the serine residue undergoes an oxidative deamination to produce ammonia and the pyruvoyl prosthetic group on the alpha chain.

Its subcellular location is the cell membrane. It carries out the reaction a 1,2-diacyl-sn-glycero-3-phospho-L-serine + H(+) = a 1,2-diacyl-sn-glycero-3-phosphoethanolamine + CO2. The protein operates within phospholipid metabolism; phosphatidylethanolamine biosynthesis; phosphatidylethanolamine from CDP-diacylglycerol: step 2/2. Functionally, catalyzes the formation of phosphatidylethanolamine (PtdEtn) from phosphatidylserine (PtdSer). This chain is Phosphatidylserine decarboxylase proenzyme, found in Cytophaga hutchinsonii (strain ATCC 33406 / DSM 1761 / CIP 103989 / NBRC 15051 / NCIMB 9469 / D465).